Here is a 309-residue protein sequence, read N- to C-terminus: tRNA dimethylallyltransferase (309 aa).

8 to 15 contacts ATP; it reads GPTATGKS. 10–15 contributes to the substrate binding site; sequence TATGKS. The segment at 33 to 36 is interaction with substrate tRNA; that stretch reads DSRQ.

Belongs to the IPP transferase family. In terms of assembly, monomer. It depends on Mg(2+) as a cofactor.

It carries out the reaction adenosine(37) in tRNA + dimethylallyl diphosphate = N(6)-dimethylallyladenosine(37) in tRNA + diphosphate. Its function is as follows. Catalyzes the transfer of a dimethylallyl group onto the adenine at position 37 in tRNAs that read codons beginning with uridine, leading to the formation of N6-(dimethylallyl)adenosine (i(6)A). The protein is tRNA dimethylallyltransferase of Trichodesmium erythraeum (strain IMS101).